A 447-amino-acid chain; its full sequence is MTIYHFVGIKGSGMSALAQILHDKGFQVQGSDVDKYFFTQKALEEKQIPIMTFSADNINEGLTIIAGNAFPDTHEEIERALELGLPVIRYHKFLGQLIDGYTSIAITGSHGKTSTTGLLSHVVGAIRPTSYLIGDGTGSGTKNAQYFALEACEYQRHFLAYKPTYAIMTNIDWDHPDYFKSVDDVFNAFETLGKQVKKAVFALGDDEELRKLSLDIPIIYFGFDEENEFQAKNVIKETTGTRFDVYHRDEFLASFEIPAYGDHNVLNALSVIALCDYEGLPVEAVKKELKTFEGVKRRFSITEKGNQVLVDDYAHHPSEIRATVNAARQKYPDKKVVAVFQPHTFTRTRTFLQGFADSLNLADEVYLCDIFGSAREKTGNLTIADLAHKTKGNHIIKEEHTEELLKYPGAVILFMGAGDVQKFQAAYEKVLDNEVVTKSDFKKSAIN.

ATP is bound at residue 108-114 (GSHGKTS).

The protein belongs to the MurCDEF family.

The protein resides in the cytoplasm. It catalyses the reaction UDP-N-acetyl-alpha-D-muramate + L-alanine + ATP = UDP-N-acetyl-alpha-D-muramoyl-L-alanine + ADP + phosphate + H(+). Its pathway is cell wall biogenesis; peptidoglycan biosynthesis. Functionally, cell wall formation. This is UDP-N-acetylmuramate--L-alanine ligase from Listeria welshimeri serovar 6b (strain ATCC 35897 / DSM 20650 / CCUG 15529 / CIP 8149 / NCTC 11857 / SLCC 5334 / V8).